A 278-amino-acid chain; its full sequence is Thiazole synthase (278 aa).

Lys-107 serves as the catalytic Schiff-base intermediate with DXP. Residues Gly-168, 194–195 (AG), and 216–217 (AS) each bind 1-deoxy-D-xylulose 5-phosphate.

It belongs to the ThiG family. In terms of assembly, homotetramer. Forms heterodimers with either ThiH or ThiS.

Its subcellular location is the cytoplasm. The enzyme catalyses [ThiS sulfur-carrier protein]-C-terminal-Gly-aminoethanethioate + 2-iminoacetate + 1-deoxy-D-xylulose 5-phosphate = [ThiS sulfur-carrier protein]-C-terminal Gly-Gly + 2-[(2R,5Z)-2-carboxy-4-methylthiazol-5(2H)-ylidene]ethyl phosphate + 2 H2O + H(+). It functions in the pathway cofactor biosynthesis; thiamine diphosphate biosynthesis. Catalyzes the rearrangement of 1-deoxy-D-xylulose 5-phosphate (DXP) to produce the thiazole phosphate moiety of thiamine. Sulfur is provided by the thiocarboxylate moiety of the carrier protein ThiS. In vitro, sulfur can be provided by H(2)S. This chain is Thiazole synthase, found in Corynebacterium jeikeium (strain K411).